Here is a 106-residue protein sequence, read N- to C-terminus: SH3 domain-binding glutamic acid-rich-like protein 2 (106 aa).

The SH3-binding motif lies at 61 to 67 (QGNPLPP).

The protein belongs to the SH3BGR family.

The protein localises to the nucleus. This chain is SH3 domain-binding glutamic acid-rich-like protein 2 (sh3bgrl2), found in Xenopus tropicalis (Western clawed frog).